The chain runs to 57 residues: Andropin (57 aa).

A signal peptide spans 1 to 23; sequence MKYFVVLVVLALILAITVDPSDA.

The protein belongs to the andropin family. In terms of tissue distribution, ejaculatory duct of adult males.

The protein resides in the secreted. Male-specific peptide with moderate activity against Gram-positive bacteria. The polypeptide is Andropin (Anp) (Drosophila sechellia (Fruit fly)).